The following is a 312-amino-acid chain: Olfactory receptor 52A1 (312 aa).

Residues 1–27 (MSISNITVYMPSVLTLVGIPGLESVQC) lie on the Extracellular side of the membrane. The N-linked (GlcNAc...) asparagine glycan is linked to asparagine 5. Residues 28–48 (WIGIPFCAIYLIAMIGNSLLL) traverse the membrane as a helical segment. Over 49–56 (SIIKSERS) the chain is Cytoplasmic. Residues 57-77 (LHEPLYIFLGMLGATDIALAS) traverse the membrane as a helical segment. Topologically, residues 78 to 101 (SIMPKMLGIFWFNVPEIYFDSCLL) are extracellular. Cysteine 99 and cysteine 182 form a disulfide bridge. A helical membrane pass occupies residues 102-122 (QMWFIHTLQGIESGILVAMAL). Topologically, residues 123–141 (DRYVAICYPLRHANIFTHQ) are cytoplasmic. A helical membrane pass occupies residues 142–162 (LVIQIGTMVVLRAAILVAPCL). Topologically, residues 163-199 (VLIKCRFQFYHTTVISHSYCEHMAIVKLAAANVQVNK) are extracellular. A helical membrane pass occupies residues 200–220 (IYGLFVAFTVAGFDLTFITLS). At 221 to 240 (YIQIFITVFRLPQKEARFKA) the chain is on the cytoplasmic side. The chain crosses the membrane as a helical span at residues 241–261 (FNTCIAHICVFLQFYLLAFFS). Topologically, residues 262 to 276 (FFTHRFGSHISPYIH) are extracellular. A helical membrane pass occupies residues 277–297 (ILFSSIYLLVPPFLNPLVYGA). Over 298–312 (KTTQIRIHVVKMFCS) the chain is Cytoplasmic.

Belongs to the G-protein coupled receptor 1 family.

It is found in the cell membrane. Odorant receptor. In Homo sapiens (Human), this protein is Olfactory receptor 52A1 (OR52A1).